A 1466-amino-acid polypeptide reads, in one-letter code: ABC transporter G family member 40 (1466 aa).

Residues 1–21 (MSHRHHAALVASASGRSPSWG) are disordered. An ABC transporter 1 domain is found at 176–449 (GLIGQFGSSN…FEASGFRCPQ (274 aa)). 209 to 216 (GPPSSGKS) is an ATP binding site. The region spanning 527 to 740 (ESLKAVLCRE…SQNAISINEF (214 aa)) is the ABC transmembrane type-2 1 domain. 6 consecutive transmembrane segments (helical) span residues 545 to 565 (FLYI…MTVF), 581 to 601 (FLGA…SELN), 633 to 653 (VPVS…VMGF), 664 to 684 (FLAF…LGAI), 690 to 710 (IAIS…GFVI), and 776 to 796 (FWLS…LYIL). The segment covering 821–831 (YTETRNEEHRS) has biased composition (basic and acidic residues). Residues 821–851 (YTETRNEEHRSRTSTTTSSIPTSANGEGNRP) are disordered. The span at 833–843 (TSTTTSSIPTS) shows a compositional bias: low complexity. Residues 865–1117 (LCFNHLNYYV…KLVEYFETIL (253 aa)) enclose the ABC transporter 2 domain. Residue 910–917 (GVSGAGKT) coordinates ATP. The region spanning 1190–1404 (IQCVANLWKQ…TIYGVIASQF (215 aa)) is the ABC transmembrane type-2 2 domain. A run of 7 helical transmembrane segments spans residues 1209–1229 (YNSL…TVFW), 1241–1261 (LYNL…TNCM), 1297–1317 (FIYN…MIGY), 1327–1347 (FLFF…MLVA), 1355–1375 (ANIL…FLIF), 1396–1416 (IYGV…VPGG), and 1435–1455 (FLGY…LIFG).

This sequence belongs to the ABC transporter superfamily. ABCG family. PDR (TC 3.A.1.205) subfamily.

The protein localises to the membrane. The sequence is that of ABC transporter G family member 40 from Oryza sativa subsp. japonica (Rice).